The sequence spans 449 residues: Putative tartrate transporter (449 aa).

Transmembrane regions (helical) follow at residues 34 to 54 (IVPFIMLLYFIAFLDRVNIGF), 64 to 84 (GFSSTVFGIGAGIFFVGYFLF), 99 to 119 (IWIARVMITWGIVSGLMAFVQ), 130 to 150 (LLGVAEAGFFPGIILYLSFWF), 156 to 176 (AAVTALFMAAAPLSTVLGSPI), 194 to 214 (WMFLIEAAPALILGVVVLFFL), 259 to 279 (VIALALVYFGTSAGLYTLGIW), 292 to 312 (IEVGFINAVPGIFAVVAMVLW), 336 to 356 (GLAFAAGATSVFMVLIALTIV), 367 to 387 (LWSMPTMFLSGPAAAAGIATI), and 414 to 434 (GGLYFVAGLLLISAILTLILA).

The protein belongs to the major facilitator superfamily. Phthalate permease family.

The protein resides in the cell membrane. Functionally, component of the tartrate utilization system and may allow entry of tartrate and tartrate dehydrogenase. The protein is Putative tartrate transporter (ttuB) of Agrobacterium vitis (Rhizobium vitis).